A 323-amino-acid polypeptide reads, in one-letter code: L-lactate dehydrogenase (323 aa).

NAD(+) is bound by residues Val16, Asn37, and 81–82 (GA). Substrate contacts are provided by residues Gln84, Arg90, and 122-125 (NPVD). Residues 120-122 (ATN) and Ser145 each bind NAD(+). 150-153 (DSAR) contributes to the substrate binding site. His177 acts as the Proton acceptor in catalysis. Phosphotyrosine is present on Tyr221. Substrate is bound at residue Thr230.

It belongs to the LDH/MDH superfamily. LDH family. In terms of assembly, homotetramer.

It localises to the cytoplasm. It carries out the reaction (S)-lactate + NAD(+) = pyruvate + NADH + H(+). Its pathway is fermentation; pyruvate fermentation to lactate; (S)-lactate from pyruvate: step 1/1. Functionally, catalyzes the conversion of lactate to pyruvate. This chain is L-lactate dehydrogenase, found in Limosilactobacillus reuteri (Lactobacillus reuteri).